The chain runs to 438 residues: Chromosomal replication initiator protein DnaA (438 aa).

The domain I, interacts with DnaA modulators stretch occupies residues 1–71 (MTTKEFLTII…CFEIYDGSKP (71 aa)). A domain II region spans residues 71–100 (PTIEIKLSNEKKSKKEILKEQTQNESTEST). Residues 101–315 (ILNPSYTFDS…GVLIRINASA (215 aa)) form a domain III, AAA+ region region. 4 residues coordinate ATP: glycine 145, glycine 147, lysine 148, and threonine 149. The segment at 316-438 (SLLNQEITLP…LKNKIINSRE (123 aa)) is domain IV, binds dsDNA.

It belongs to the DnaA family. Oligomerizes as a right-handed, spiral filament on DNA at oriC.

It localises to the cytoplasm. In terms of biological role, plays an essential role in the initiation and regulation of chromosomal replication. ATP-DnaA binds to the origin of replication (oriC) to initiate formation of the DNA replication initiation complex once per cell cycle. Binds the DnaA box (a 9 base pair repeat at the origin) and separates the double-stranded (ds)DNA. Forms a right-handed helical filament on oriC DNA; dsDNA binds to the exterior of the filament while single-stranded (ss)DNA is stabiized in the filament's interior. The ATP-DnaA-oriC complex binds and stabilizes one strand of the AT-rich DNA unwinding element (DUE), permitting loading of DNA polymerase. After initiation quickly degrades to an ADP-DnaA complex that is not apt for DNA replication. Binds acidic phospholipids. The sequence is that of Chromosomal replication initiator protein DnaA from Aliarcobacter butzleri (strain RM4018) (Arcobacter butzleri).